A 1094-amino-acid chain; its full sequence is RecBCD enzyme subunit RecB (1094 aa).

Residues 1-326 (MDRFELLGPL…YTLGVNWRSD (326 aa)) enclose the UvrD-like helicase ATP-binding domain. Positions 1-713 (MDRFELLGPL…LLRGRRPGQS (713 aa)) are DNA-binding and helicase activity, interacts with RecC. Residue 21–28 (ASAGTGKT) coordinates ATP. The 257-residue stretch at 357–613 (AGHRLASAPR…QIMTVFVAKG (257 aa)) folds into the UvrD-like helicase C-terminal domain. The tract at residues 775 to 1094 (TWRRTSYSDL…DLLDRGRLQS (320 aa)) is nuclease activity, interacts with RecD and RecA. Residues His838, Asp975, and Asp989 each contribute to the Mg(2+) site. Catalysis depends on Asp989, which acts as the For nuclease activity.

The protein belongs to the helicase family. UvrD subfamily. As to quaternary structure, heterotrimer of RecB, RecC and RecD. All subunits contribute to DNA-binding. Interacts with RecA. Requires Mg(2+) as cofactor.

The catalysed reaction is Exonucleolytic cleavage (in the presence of ATP) in either 5'- to 3'- or 3'- to 5'-direction to yield 5'-phosphooligonucleotides.. The enzyme catalyses Couples ATP hydrolysis with the unwinding of duplex DNA by translocating in the 3'-5' direction.. It catalyses the reaction ATP + H2O = ADP + phosphate + H(+). In terms of biological role, a helicase/nuclease that prepares dsDNA breaks (DSB) for recombinational DNA repair. Binds to DSBs and unwinds DNA via a highly rapid and processive ATP-dependent bidirectional helicase activity. In the holoenzyme this subunit contributes ATPase, 3'-5' helicase, exonuclease activity and loads RecA onto ssDNA. Unlike the case in E.coli, suppresses RecA-dependent homologous recombination, is instead required for single-strand annealing pathway repair of DSB. This chain is RecBCD enzyme subunit RecB, found in Mycobacterium tuberculosis (strain CDC 1551 / Oshkosh).